The following is a 493-amino-acid chain: Galactose-1-phosphate uridylyltransferase (493 aa).

The protein belongs to the galactose-1-phosphate uridylyltransferase type 2 family.

It localises to the cytoplasm. The catalysed reaction is alpha-D-galactose 1-phosphate + UDP-alpha-D-glucose = alpha-D-glucose 1-phosphate + UDP-alpha-D-galactose. Its pathway is carbohydrate metabolism; galactose metabolism. The polypeptide is Galactose-1-phosphate uridylyltransferase (Streptococcus thermophilus (strain ATCC BAA-250 / LMG 18311)).